Here is a 140-residue protein sequence, read N- to C-terminus: Nucleoside diphosphate kinase (140 aa).

ATP-binding residues include K11, F59, R87, T93, R104, and N114. Catalysis depends on H117, which acts as the Pros-phosphohistidine intermediate.

It belongs to the NDK family. Homotetramer. It depends on Mg(2+) as a cofactor.

Its subcellular location is the cytoplasm. The enzyme catalyses a 2'-deoxyribonucleoside 5'-diphosphate + ATP = a 2'-deoxyribonucleoside 5'-triphosphate + ADP. It catalyses the reaction a ribonucleoside 5'-diphosphate + ATP = a ribonucleoside 5'-triphosphate + ADP. Major role in the synthesis of nucleoside triphosphates other than ATP. The ATP gamma phosphate is transferred to the NDP beta phosphate via a ping-pong mechanism, using a phosphorylated active-site intermediate. The protein is Nucleoside diphosphate kinase of Rhodospirillum centenum (strain ATCC 51521 / SW).